The primary structure comprises 504 residues: ATP synthase subunit alpha, chloroplastic (504 aa).

170 to 177 (GDRQTGKT) contributes to the ATP binding site.

The protein belongs to the ATPase alpha/beta chains family. As to quaternary structure, F-type ATPases have 2 components, CF(1) - the catalytic core - and CF(0) - the membrane proton channel. CF(1) has five subunits: alpha(3), beta(3), gamma(1), delta(1), epsilon(1). CF(0) has four main subunits: a, b, b' and c.

The protein resides in the plastid. It is found in the chloroplast thylakoid membrane. The catalysed reaction is ATP + H2O + 4 H(+)(in) = ADP + phosphate + 5 H(+)(out). Its function is as follows. Produces ATP from ADP in the presence of a proton gradient across the membrane. The alpha chain is a regulatory subunit. The sequence is that of ATP synthase subunit alpha, chloroplastic from Jasminum nudiflorum (Winter jasmine).